A 507-amino-acid chain; its full sequence is ATP synthase subunit alpha, chloroplastic (507 aa).

170–177 is an ATP binding site; that stretch reads GDRQTGKT. Disordered stretches follow at residues 278-325, 392-430, and 452-471; these read PRRP…TQAG, EPEASAQFASDPDKATRNQSARGQRSRELLKQSQPAPLP, and GQVQGSPAQSREYLVTNKPE. Residues 282-303 show a composition bias toward basic and acidic residues; sequence PGREAHPGDVPHLHPRPPERAA. Residues 305–322 show a composition bias toward polar residues; the sequence is LSSQPGEGSTTASPTVET.

It belongs to the ATPase alpha/beta chains family. As to quaternary structure, F-type ATPases have 2 components, CF(1) - the catalytic core - and CF(0) - the membrane proton channel. CF(1) has five subunits: alpha(3), beta(3), gamma(1), delta(1), epsilon(1). CF(0) has four main subunits: a, b, b' and c.

The protein resides in the plastid. Its subcellular location is the chloroplast thylakoid membrane. The catalysed reaction is ATP + H2O + 4 H(+)(in) = ADP + phosphate + 5 H(+)(out). Its function is as follows. Produces ATP from ADP in the presence of a proton gradient across the membrane. The alpha chain is a regulatory subunit. The sequence is that of ATP synthase subunit alpha, chloroplastic from Selaginella uncinata (Blue spike-moss).